An 82-amino-acid polypeptide reads, in one-letter code: Transcription elongation factor 1 homolog (82 aa).

Positions 26, 29, 50, and 53 each coordinate Zn(2+).

This sequence belongs to the ELOF1 family.

It is found in the nucleus. Functionally, transcription elongation factor implicated in the maintenance of proper chromatin structure in actively transcribed regions. The protein is Transcription elongation factor 1 homolog of Drosophila melanogaster (Fruit fly).